The following is a 276-amino-acid chain: NAD-capped RNA hydrolase NudC (276 aa).

Arg82 serves as a coordination point for substrate. Residues Cys112 and Cys115 each contribute to the Zn(2+) site. Substrate is bound at residue Glu125. 2 residues coordinate Zn(2+): Cys130 and Cys133. Tyr138 is a substrate binding site. The Nudix hydrolase domain occupies 139-262 (PRISPSMIVL…SIARYLIDLY (124 aa)). The a divalent metal cation site is built by Ala172, Glu188, and Glu192. The Nudix box signature appears at 173-194 (GFAEPGESAEDCLVREVREEVA). A substrate-binding site is contributed by 206 to 213 (QCWPFPHS). A divalent metal cation is bound at residue Glu233. A substrate-binding site is contributed by Ala255.

The protein belongs to the Nudix hydrolase family. NudC subfamily. In terms of assembly, homodimer. Requires Mg(2+) as cofactor. It depends on Mn(2+) as a cofactor. Zn(2+) is required as a cofactor.

It catalyses the reaction a 5'-end NAD(+)-phospho-ribonucleoside in mRNA + H2O = a 5'-end phospho-adenosine-phospho-ribonucleoside in mRNA + beta-nicotinamide D-ribonucleotide + 2 H(+). The enzyme catalyses NAD(+) + H2O = beta-nicotinamide D-ribonucleotide + AMP + 2 H(+). The catalysed reaction is NADH + H2O = reduced beta-nicotinamide D-ribonucleotide + AMP + 2 H(+). Functionally, mRNA decapping enzyme that specifically removes the nicotinamide adenine dinucleotide (NAD) cap from a subset of mRNAs by hydrolyzing the diphosphate linkage to produce nicotinamide mononucleotide (NMN) and 5' monophosphate mRNA. The NAD-cap is present at the 5'-end of some mRNAs and stabilizes RNA against 5'-processing. Has preference for mRNAs with a 5'-end purine. Catalyzes the hydrolysis of a broad range of dinucleotide pyrophosphates. In Pseudomonas putida (strain GB-1), this protein is NAD-capped RNA hydrolase NudC.